The primary structure comprises 326 residues: Methyltransferase phqN (326 aa).

It belongs to the class I-like SAM-binding methyltransferase superfamily. Erg6/SMT family.

It functions in the pathway alkaloid biosynthesis. Its function is as follows. Methyltransferase; part of the gene cluster that mediates the biosynthesis of paraherquamide, a fungal indole alkaloid that belongs to a family of natural products containing a characteristic bicyclo[2.2.2]diazaoctane core. The first steps in the biosynthesis of paraherquamide is the production of the beta-methyl-proline precursor from L-isoleucine. They require oxidation of a terminally hydroxylated L-isoleucine to the corresponding aldehyde by enzymes which have still to be identified. Spontaneous cyclization and dehydration would yield the 4-methyl pyrolline-5-carboxylic acid, which is then reduced by the pyrroline-5-carboxylate reductase phqD leading to the beta-methyl-proline precursor. The next step of paraherquamide biosynthesis involves coupling of beta-methyl-proline and L-tryptophan by the bimodular NRPS phqB, to produce a monooxopiperazine intermediate. The reductase (R) domain of phqB utilizes NADPH for hydride transfer to reduce the thioester bond of the T domain-tethered linear dipeptide to a hemithioaminal intermediate, which spontaneously cleaves the C-S bond to release the aldehyde product. This compound undergoes spontaneous cyclization and dehydration to give a dienamine which is reverse prenylated at C-2 by the reverse prenyltransferase phqJ. The other prenyltransferase present in the cluster, phqI may be a redundant gene in the pathway. During biosynthetic assembly, the key step to produce the polycyclic core is catalyzed by the bifunctional reductase and intramolecular [4+2] Diels-Alderase, phqE, resulting in formation of the [2.2.2] diazaoctane intermediate preparaherquamide. Following formation of preparaherquamide, an indole 2,3-epoxidation-initiated pinacol-like rearrangement is catalyzed by the phqK FAD-dependent monooxygenase. The prenyltransferase phqA, the cytochrome P450 monooxygenase phqL, and the FAD-linked oxidoreductase phqH (or the cytochrome P450 monooxygenase phqM), are proposed to be involved in the formation of the pyran ring. The FAD-dependent monooxygenase phqK is likely responsible for generation of the spiro-oxindole, and the N-methylation is likely mediated by the phqN methyltransferase leading to the isolable natural product paraherquamide F. However, the order of these biosynthetic steps has still to be determined. In late-stage paraherquamide biosynthesis, the third P450 monooxygenase, phqO, is probably responsible for the C-14 hydroxylation, transforming paraherquamide F to paraherquamide G, and paraherquamide E to the final product paraherquamide A. The expansion from the 6-membered ring pyran (in paraherquamides F and G) to the 7-membered dioxepin ring (in paraherquamides A and E) represents a poorly understood but intriguing process that probably involves the 2-oxoglutarate-dependent dioxygenase phqC. Finally, the remaining members of the paraherquamide cluster, including phqI as well as phqM (or phqH), do not have a clearly prescribed role and appear to be redundant. The chain is Methyltransferase phqN from Penicillium fellutanum.